The chain runs to 131 residues: Small ribosomal subunit protein uS8 (131 aa).

The protein belongs to the universal ribosomal protein uS8 family. As to quaternary structure, part of the 30S ribosomal subunit. Contacts proteins S5 and S12.

Functionally, one of the primary rRNA binding proteins, it binds directly to 16S rRNA central domain where it helps coordinate assembly of the platform of the 30S subunit. In Novosphingobium aromaticivorans (strain ATCC 700278 / DSM 12444 / CCUG 56034 / CIP 105152 / NBRC 16084 / F199), this protein is Small ribosomal subunit protein uS8.